Reading from the N-terminus, the 450-residue chain is Phosphoglucosamine mutase (450 aa).

Serine 102 acts as the Phosphoserine intermediate in catalysis. Mg(2+) contacts are provided by serine 102, aspartate 243, aspartate 245, and aspartate 247. At serine 102 the chain carries Phosphoserine.

The protein belongs to the phosphohexose mutase family. Requires Mg(2+) as cofactor. Post-translationally, activated by phosphorylation.

The enzyme catalyses alpha-D-glucosamine 1-phosphate = D-glucosamine 6-phosphate. Catalyzes the conversion of glucosamine-6-phosphate to glucosamine-1-phosphate. The protein is Phosphoglucosamine mutase of Rhizobium johnstonii (strain DSM 114642 / LMG 32736 / 3841) (Rhizobium leguminosarum bv. viciae).